A 263-amino-acid polypeptide reads, in one-letter code: Oxygen-evolving enhancer protein 2, chloroplastic (263 aa).

The transit peptide at 1–78 directs the protein to the chloroplast; sequence MAAASCFHAL…VGTKVSPADA (78 aa). Residues 14–30 are compositionally biased toward low complexity; sequence ARSSSSSLQSSSSRLPA. The segment at 14–34 is disordered; sequence ARSSSSSLQSSSSRLPAPIKP.

The protein belongs to the PsbP family.

It is found in the plastid. The protein localises to the chloroplast thylakoid membrane. May be involved in the regulation of photosystem II. The protein is Oxygen-evolving enhancer protein 2, chloroplastic of Helianthus annuus (Common sunflower).